An 874-amino-acid chain; its full sequence is Alanine--tRNA ligase (874 aa).

His-562, His-566, Cys-664, and His-668 together coordinate Zn(2+).

It belongs to the class-II aminoacyl-tRNA synthetase family. Zn(2+) is required as a cofactor.

The protein localises to the cytoplasm. It catalyses the reaction tRNA(Ala) + L-alanine + ATP = L-alanyl-tRNA(Ala) + AMP + diphosphate. In terms of biological role, catalyzes the attachment of alanine to tRNA(Ala) in a two-step reaction: alanine is first activated by ATP to form Ala-AMP and then transferred to the acceptor end of tRNA(Ala). Also edits incorrectly charged Ser-tRNA(Ala) and Gly-tRNA(Ala) via its editing domain. This is Alanine--tRNA ligase from Neisseria meningitidis serogroup C / serotype 2a (strain ATCC 700532 / DSM 15464 / FAM18).